Here is a 232-residue protein sequence, read N- to C-terminus: Ethylene-responsive transcription factor ERF025 (232 aa).

A compositionally biased stretch (polar residues) spans 1–29 (MSNNNNSPTTVNQETTTSREVSITLPTDQ). Positions 1 to 63 (MSNNNNSPTT…TATGLSGKHS (63 aa)) are disordered. Low complexity predominate over residues 30-50 (SPQTSPGSSSSPSPRPSGGSP). The AP2/ERF DNA-binding region spans 64–120 (IFRGIRLRNGKWVSEIREPRKTTRIWLGTYPVPEMAAAAYDVAALALKGPDAVLNFP). The tract at residues 213–232 (PTMEDDSPENHEGDNLWSYK) is disordered.

It belongs to the AP2/ERF transcription factor family. ERF subfamily.

It is found in the nucleus. Probably acts as a transcriptional activator. Binds to the GCC-box pathogenesis-related promoter element. May be involved in the regulation of gene expression by stress factors and by components of stress signal transduction pathways. In Arabidopsis thaliana (Mouse-ear cress), this protein is Ethylene-responsive transcription factor ERF025 (ERF025).